Consider the following 379-residue polypeptide: Inactive deoxyhypusine synthase (379 aa).

The segment at 1 to 48 is disordered; it reads MLASVPAPRPAKKDSAASRRKSASKSTGAAVKDGSSARVSASGAAESP. The segment covering 36 to 47 has biased composition (low complexity); that stretch reads SARVSASGAAES. Residues 115 to 119, 141 to 143, glutamate 147, and aspartate 256 each bind NAD(+); these read SNMIS and SAG. 146 to 147 lines the spermidine pocket; sequence EE. Aspartate 261 serves as a coordination point for spermidine. Position 302 (glycine 302) interacts with NAD(+). Histidine 307 is a binding site for spermidine. Residue 323–324 coordinates NAD(+); that stretch reads TG. Residues 329–331 and 338–344 contribute to the spermidine site; these read GCV and DDVACGL. 357-358 lines the NAD(+) pocket; that stretch reads DA.

The protein belongs to the deoxyhypusine synthase family.

This is Inactive deoxyhypusine synthase from Leishmania donovani.